We begin with the raw amino-acid sequence, 246 residues long: MIMASSKLLSLALFLALLSHANSATETSFIIDAFNKTNLILQGDATVSSNGNLQLSYNSYDSMSRAFYSAPIQIRDSTTGNVASFDTNFTMNIRTHRQANSAVGLDFVLVPVQPESKGDTVTVEFDTFLSRISIDVNNNDIKSVPWDVHDYDGQNAEVRITYNSSTKVFSVSLSNPSTGKSNNVSTTVELEKEVYDWVSVGFSATSGAYQWSYETHDVLSWSFSSKFINLKDQKSERSNIVLNKIL.

Positions Met1–Ser23 are cleaved as a signal peptide. Asn35, Asn88, and Asn163 each carry an N-linked (GlcNAc...) asparagine glycan. A propeptide spanning residues Ile240–Leu246 is cleaved from the precursor.

This sequence belongs to the leguminous lectin family. In terms of assembly, heterodimer of chain 1 and chain 2. Post-translationally, proteolytic processing yields active form.

In terms of biological role, lectin and alpha-amylase inhibitor. Acts as a defensive protein against insects. This Phaseolus vulgaris (Kidney bean) protein is Alpha-amylase inhibitor 1 (LLP).